A 196-amino-acid chain; its full sequence is Large ribosomal subunit protein eL15 (196 aa).

Residues 159 to 196 (RAYRGRTSAGQRGRGQQKRGKGTEHTRPSIRANDKRGK) are disordered. Residues 179 to 196 (KGTEHTRPSIRANDKRGK) are compositionally biased toward basic and acidic residues.

The protein belongs to the eukaryotic ribosomal protein eL15 family.

The protein is Large ribosomal subunit protein eL15 of Natronomonas pharaonis (strain ATCC 35678 / DSM 2160 / CIP 103997 / JCM 8858 / NBRC 14720 / NCIMB 2260 / Gabara) (Halobacterium pharaonis).